A 91-amino-acid polypeptide reads, in one-letter code: Molybdopterin synthase sulfur carrier subunit (91 aa).

Gly-91 carries the post-translational modification 1-thioglycine; alternate. Gly-91 is subject to Glycyl adenylate; alternate.

Belongs to the MoaD family. MOCS2A subfamily. In terms of assembly, heterotetramer; composed of 2 small (MOCS2A) and 2 large (MOCS2B) subunits. Post-translationally, C-terminal thiocarboxylation occurs in 2 steps, it is first acyl-adenylated (-COAMP) via the hesA/moeB/thiF part of uba4, then thiocarboxylated (-COSH) via the rhodanese domain of uba4.

It localises to the cytoplasm. The protein operates within cofactor biosynthesis; molybdopterin biosynthesis. In terms of biological role, acts as a sulfur carrier required for molybdopterin biosynthesis. Component of the molybdopterin synthase complex that catalyzes the conversion of precursor Z into molybdopterin by mediating the incorporation of 2 sulfur atoms into precursor Z to generate a dithiolene group. In the complex, serves as sulfur donor by being thiocarboxylated (-COSH) at its C-terminus by uba4. After interaction with MOCS2B, the sulfur is then transferred to precursor Z to form molybdopterin. The protein is Molybdopterin synthase sulfur carrier subunit of Emericella nidulans (strain FGSC A4 / ATCC 38163 / CBS 112.46 / NRRL 194 / M139) (Aspergillus nidulans).